Consider the following 121-residue polypeptide: Large ribosomal subunit protein uL18 (121 aa).

The protein belongs to the universal ribosomal protein uL18 family. As to quaternary structure, part of the 50S ribosomal subunit; part of the 5S rRNA/L5/L18/L25 subcomplex. Contacts the 5S and 23S rRNAs.

This is one of the proteins that bind and probably mediate the attachment of the 5S RNA into the large ribosomal subunit, where it forms part of the central protuberance. The sequence is that of Large ribosomal subunit protein uL18 from Dehalococcoides mccartyi (strain ATCC BAA-2266 / KCTC 15142 / 195) (Dehalococcoides ethenogenes (strain 195)).